We begin with the raw amino-acid sequence, 466 residues long: Ribulose bisphosphate carboxylase large chain (466 aa).

Lys5 is subject to N6,N6,N6-trimethyllysine. Asn114 and Thr164 together coordinate substrate. Residue Lys166 is the Proton acceptor of the active site. Residue Lys168 coordinates substrate. 3 residues coordinate Mg(2+): Lys192, Asp194, and Glu195. N6-carboxylysine is present on Lys192. The Proton acceptor role is filled by His285. Residues Arg286, His318, and Ser370 each contribute to the substrate site.

The protein belongs to the RuBisCO large chain family. Type I subfamily. As to quaternary structure, heterohexadecamer of 8 large chains and 8 small chains; disulfide-linked. The disulfide link is formed within the large subunit homodimers. It depends on Mg(2+) as a cofactor. In terms of processing, the disulfide bond which can form in the large chain dimeric partners within the hexadecamer appears to be associated with oxidative stress and protein turnover.

The protein resides in the plastid. It localises to the chloroplast. It catalyses the reaction 2 (2R)-3-phosphoglycerate + 2 H(+) = D-ribulose 1,5-bisphosphate + CO2 + H2O. The enzyme catalyses D-ribulose 1,5-bisphosphate + O2 = 2-phosphoglycolate + (2R)-3-phosphoglycerate + 2 H(+). RuBisCO catalyzes two reactions: the carboxylation of D-ribulose 1,5-bisphosphate, the primary event in carbon dioxide fixation, as well as the oxidative fragmentation of the pentose substrate in the photorespiration process. Both reactions occur simultaneously and in competition at the same active site. The polypeptide is Ribulose bisphosphate carboxylase large chain (Drosera filiformis (Thread-leaved sundew)).